We begin with the raw amino-acid sequence, 235 residues long: Uridylate kinase (235 aa).

10-13 contributes to the ATP binding site; that stretch reads KLSG. Gly-52 serves as a coordination point for UMP. The ATP site is built by Gly-53 and Arg-57. UMP-binding positions include Asp-72 and 133–140; that span reads TSNPYFST. Positions 160, 166, and 169 each coordinate ATP.

The protein belongs to the UMP kinase family. Homohexamer.

The protein localises to the cytoplasm. The enzyme catalyses UMP + ATP = UDP + ADP. It participates in pyrimidine metabolism; CTP biosynthesis via de novo pathway; UDP from UMP (UMPK route): step 1/1. Inhibited by UTP. Functionally, catalyzes the reversible phosphorylation of UMP to UDP. The polypeptide is Uridylate kinase (Solibacter usitatus (strain Ellin6076)).